We begin with the raw amino-acid sequence, 137 residues long: Small ribosomal subunit protein uS12 (137 aa).

A disordered region spans residues 1–57; the sequence is MPTINQLVRKPRKSKVEKPKSPALNVGYNSHKKVQTNVSSPQKRGVATRVGTMTPRK. Aspartate 102 bears the 3-methylthioaspartic acid mark.

This sequence belongs to the universal ribosomal protein uS12 family. As to quaternary structure, part of the 30S ribosomal subunit. Contacts proteins S8 and S17. May interact with IF1 in the 30S initiation complex.

Its function is as follows. With S4 and S5 plays an important role in translational accuracy. In terms of biological role, interacts with and stabilizes bases of the 16S rRNA that are involved in tRNA selection in the A site and with the mRNA backbone. Located at the interface of the 30S and 50S subunits, it traverses the body of the 30S subunit contacting proteins on the other side and probably holding the rRNA structure together. The combined cluster of proteins S8, S12 and S17 appears to hold together the shoulder and platform of the 30S subunit. The polypeptide is Small ribosomal subunit protein uS12 (Streptococcus pneumoniae (strain Hungary19A-6)).